The chain runs to 64 residues: Large ribosomal subunit protein bL33 (64 aa).

Belongs to the bacterial ribosomal protein bL33 family.

In Synechococcus elongatus (strain ATCC 33912 / PCC 7942 / FACHB-805) (Anacystis nidulans R2), this protein is Large ribosomal subunit protein bL33.